Consider the following 452-residue polypeptide: Pup--protein ligase (452 aa).

E9 provides a ligand contact to Mg(2+). Position 53 (R53) interacts with ATP. Y55 is a Mg(2+) binding site. D57 acts as the Proton acceptor in catalysis. E63 serves as a coordination point for Mg(2+). Positions 66 and 419 each coordinate ATP.

Belongs to the Pup ligase/Pup deamidase family. Pup-conjugating enzyme subfamily.

The enzyme catalyses ATP + [prokaryotic ubiquitin-like protein]-L-glutamate + [protein]-L-lysine = ADP + phosphate + N(6)-([prokaryotic ubiquitin-like protein]-gamma-L-glutamyl)-[protein]-L-lysine.. Its pathway is protein degradation; proteasomal Pup-dependent pathway. The protein operates within protein modification; protein pupylation. Functionally, catalyzes the covalent attachment of the prokaryotic ubiquitin-like protein modifier Pup to the proteasomal substrate proteins, thereby targeting them for proteasomal degradation. This tagging system is termed pupylation. The ligation reaction involves the side-chain carboxylate of the C-terminal glutamate of Pup and the side-chain amino group of a substrate lysine. This is Pup--protein ligase from Nocardia farcinica (strain IFM 10152).